Consider the following 380-residue polypeptide: Alcohol dehydrogenase 1 (380 aa).

Cys-48, Thr-50, His-70, Cys-100, Cys-103, Cys-106, Cys-114, and Cys-178 together coordinate Zn(2+). An alcohol is bound by residues Thr-50 and His-70. Thr-50 contributes to the NAD(+) binding site. NAD(+) contacts are provided by residues 203-208, Asp-227, Arg-232, Thr-273, Val-296, 296-298, Phe-323, and Arg-373; these read GLGAVG and VGV.

This sequence belongs to the zinc-containing alcohol dehydrogenase family. Homodimer. Homotetramer. Zn(2+) serves as cofactor.

The protein localises to the cytoplasm. The enzyme catalyses a primary alcohol + NAD(+) = an aldehyde + NADH + H(+). The catalysed reaction is a secondary alcohol + NAD(+) = a ketone + NADH + H(+). The chain is Alcohol dehydrogenase 1 (ADH1) from Solanum tuberosum (Potato).